Consider the following 519-residue polypeptide: 2-isopropylmalate synthase (519 aa).

One can recognise a Pyruvate carboxyltransferase domain in the interval 5 to 267; that stretch reads VVIFDTTLRD…STNINYKEIY (263 aa). Positions 14, 202, 204, and 238 each coordinate Mn(2+). The tract at residues 392–519 is regulatory domain; that stretch reads SLKFFSVQSI…LKILKDFKKK (128 aa).

Belongs to the alpha-IPM synthase/homocitrate synthase family. LeuA type 1 subfamily. Homodimer. Mn(2+) serves as cofactor.

It localises to the cytoplasm. The enzyme catalyses 3-methyl-2-oxobutanoate + acetyl-CoA + H2O = (2S)-2-isopropylmalate + CoA + H(+). It participates in amino-acid biosynthesis; L-leucine biosynthesis; L-leucine from 3-methyl-2-oxobutanoate: step 1/4. Functionally, catalyzes the condensation of the acetyl group of acetyl-CoA with 3-methyl-2-oxobutanoate (2-ketoisovalerate) to form 3-carboxy-3-hydroxy-4-methylpentanoate (2-isopropylmalate). This Buchnera aphidicola subsp. Acyrthosiphon pisum (strain APS) (Acyrthosiphon pisum symbiotic bacterium) protein is 2-isopropylmalate synthase.